The sequence spans 841 residues: Toll-like receptor 4 (841 aa).

The N-terminal stretch at 1–23 (MIPRIRLAVATIPAMAFLSCLRS) is a signal peptide. The Extracellular segment spans residues 24 to 632 (ESWDPCVQVV…FRNATCQISE (609 aa)). A disulfide bond links cysteine 29 and cysteine 40. Residue asparagine 35 is glycosylated (N-linked (GlcNAc...) asparagine). LRR repeat units follow at residues 55-76 (SVKI…SFSS), 79-100 (ELQV…AYQG), 103-124 (YLST…AFSG), 127-148 (SLQK…PIGH), 151-172 (TLNE…EYFS), 176-197 (NLEH…HLQV), and 205-225 (NLSL…AFNK). 4 N-linked (GlcNAc...) asparagine glycosylation sites follow: asparagine 205, asparagine 238, asparagine 282, and asparagine 309. Cysteines 281 and 306 form a disulfide. LRR repeat units lie at residues 374 to 395 (NLQF…SHNE), 400 to 422 (KLKH…MGLE), 423 to 444 (QLEY…SIFL), 448 to 469 (NLHY…IFAG), 472 to 495 (SLQT…FTDL), 497 to 518 (NLIL…AFHS), 521 to 542 (RLQV…PYKP), and 545 to 568 (SLRI…QHLP). Cysteine 390 and cysteine 391 are disulfide-bonded. An N-linked (GlcNAc...) asparagine glycan is attached at asparagine 526. N-linked (GlcNAc...) asparagine glycosylation occurs at asparagine 575. The LRRCT domain maps to 579 to 630 (NDFSCACEHQTFLQWVKDQKQLLVGAEQMVCTQPLEMQDLPVLSFRNATCQI). 2 cysteine pairs are disulfide-bonded: cysteine 583–cysteine 609 and cysteine 585–cysteine 628. Residue asparagine 625 is glycosylated (N-linked (GlcNAc...) asparagine). The helical transmembrane segment at 633-653 (AVISASVLTFLLVSVAGILVY) threads the bilayer. Residues 654 to 841 (KFYFHLLLFV…SNQHDTTAFT (188 aa)) are Cytoplasmic-facing. Positions 673-816 (STYDAFVIYS…IFWRRLKKAL (144 aa)) constitute a TIR domain.

This sequence belongs to the Toll-like receptor family. As to quaternary structure, belongs to the lipopolysaccharide (LPS) receptor, a multi-protein complex containing at least CD14, LY96 and TLR4. Binding to bacterial LPS leads to homodimerization. Interacts with LY96 via the extracellular domain. Interacts with MYD88 and TIRAP via their respective TIR domains. Interacts with NOX4. Interacts with CNPY3 and HSP90B1; this interaction is required for proper folding in the endoplasmic reticulum. Interacts with MAP3K21; this interaction leads to negative regulation of TLR4 signaling. Interacts with CD36, following CD36 stimulation by oxLDL or amyloid-beta 42, and forms a heterodimer with TLR6. The trimeric complex is internalized and triggers inflammatory response. LYN kinase activity facilitates TLR4-TLR6 heterodimerization and signal initiation. Interacts with TICAM1 in response to LPS in a WDFY1-dependent manner. Interacts with WDFY1 in response to LPS. Interacts with SMPDL3B. Interacts with CEACAM1; upon lipopolysaccharide stimulation, forms a complex including TLR4 and the phosphorylated form of SYK and CEACAM1, which in turn, recruits PTPN6 that dephosphorylates SYK, reducing the production of reactive oxygen species (ROS) and lysosome disruption, which in turn, reduces the activity of the inflammasome. Interacts with RFTN1; the interaction occurs in response to lipopolysaccharide stimulation. Interacts with SCIMP; the interaction occurs in response to lipopolysaccharide stimulation and is enhanced by phosphorylation of SCIMP by LYN. This interaction facilitates the phosphorylation of TLR4 by LYN which elicits a selective cytokine response in macrophages. Interacts with TRAF3IP3. Interacts with TREM1; this interaction enhances TLR4-mediated inflammatory response. Interacts with ZG16B/PAUF. Interacts with CD82; this interaction inhibits TLR4-mediated signaling pathway. Phosphorylated on tyrosine residues by LYN after binding lipopolysaccharide. In terms of processing, ubiquitinated by RNF128 via 'Lys-28'-linked polyubiquitin chains, leading to proteasomal degradation.

It localises to the cell membrane. The protein resides in the early endosome. The protein localises to the cell projection. Its subcellular location is the ruffle. In terms of biological role, transmembrane receptor that functions as a pattern recognition receptor recognizing pathogen- and damage-associated molecular patterns (PAMPs and DAMPs) to induce innate immune responses via downstream signaling pathways. At the plasma membrane, cooperates with LY96 to mediate the innate immune response to bacterial lipopolysaccharide (LPS). Also involved in LPS-independent inflammatory responses triggered by free fatty acids, such as palmitate, and Ni(2+). Mechanistically, acts via MYD88, TIRAP and TRAF6, leading to NF-kappa-B activation, cytokine secretion and the inflammatory response. Alternatively, CD14-mediated TLR4 internalization via endocytosis is associated with the initiation of a MYD88-independent signaling via the TICAM1-TBK1-IRF3 axis leading to type I interferon production. In addition to the secretion of proinflammatory cytokines, initiates the activation of NLRP3 inflammasome and formation of a positive feedback loop between autophagy and NF-kappa-B signaling cascade. In complex with TLR6, promotes inflammation in monocytes/macrophages by associating with TLR6 and the receptor CD86. Upon ligand binding, such as oxLDL or amyloid-beta 42, the TLR4:TLR6 complex is internalized and triggers inflammatory response, leading to NF-kappa-B-dependent production of CXCL1, CXCL2 and CCL9 cytokines, via MYD88 signaling pathway, and CCL5 cytokine, via TICAM1 signaling pathway. In myeloid dendritic cells, vesicular stomatitis virus glycoprotein G but not LPS promotes the activation of IRF7, leading to type I IFN production in a CD14-dependent manner. The sequence is that of Toll-like receptor 4 (TLR4) from Sus scrofa (Pig).